A 199-amino-acid chain; its full sequence is MVFQSFILGNLVYLCMKIINSVVVVGLYYGFLTTFSIGPSYLFLLRARVMDEGEEGTEKKVSATTGFIAGQLMMFISIYYAPLHLALGRPHTITVLALPYLLFHFFFWNNHKHFFDYGSTTRNEMRNLRIQCVFPNNLIFKLFNHLILPSSMLARLVNIYMFRCNNKMLFVTSSFVVCVRMLLVEWAFPLFQLFLVMKV.

The next 3 helical transmembrane spans lie at 22-44, 65-87, and 91-108; these read VVVV…YLFL, TGFI…HLAL, and HTIT…FFFW.

The protein belongs to the ycf1 family.

It is found in the mitochondrion membrane. This is an uncharacterized protein from Arabidopsis thaliana (Mouse-ear cress).